The chain runs to 375 residues: Elongation factor Tu (375 aa).

The tr-type G domain occupies 10–205 (KPHINVGAIG…TMDKYFVIPE (196 aa)). Positions 19–26 (GHVDHGKT) are G1. 19–26 (GHVDHGKT) is a binding site for GTP. Residue threonine 26 participates in Mg(2+) binding. The segment at 60–64 (GITIN) is G2. A G3 region spans residues 81–84 (DCPG). GTP is bound by residues 81–85 (DCPGH) and 136–139 (NKMD). A G4 region spans residues 136–139 (NKMD). The interval 173-175 (SAF) is G5.

Belongs to the TRAFAC class translation factor GTPase superfamily. Classic translation factor GTPase family. EF-Tu/EF-1A subfamily. As to quaternary structure, monomer.

Its subcellular location is the cytoplasm. It carries out the reaction GTP + H2O = GDP + phosphate + H(+). Functionally, GTP hydrolase that promotes the GTP-dependent binding of aminoacyl-tRNA to the A-site of ribosomes during protein biosynthesis. The chain is Elongation factor Tu (tuf) from Spirochaeta aurantia.